A 351-amino-acid chain; its full sequence is MTIANRILPHAPADHPPVPVPRVGVLLANLGTPDATDYWSMRRYLNEFLSDRRVIDYPIWKWQPLLQLIILSKRPFTSGNNYRSIWNEERDESPLMTITRDQVRKLRAAVETRYGAGNVVVDFCMRYGNPSTRDVLDDMLAQGCERILFLPLYPQYAGATSATANDQFFRALMQVKRQPAARTVPEYFARPSYIEALASSVERVYATLDTRPDVLVASYHGMPKRYHREGDPYHCQCQKTSRLLRERLGWGPDSIDTTFQSVFGTEEWLRPYTVEHVVQLAEAGKKNIAVISPAFSADCIETLEEINGEIREAFEHAGGESFTYVPCLNDDDLHIAALLEVVEENLAGWID.

Fe cation is bound by residues His-220 and Glu-301.

It belongs to the ferrochelatase family.

It is found in the cytoplasm. The catalysed reaction is heme b + 2 H(+) = protoporphyrin IX + Fe(2+). It functions in the pathway porphyrin-containing compound metabolism; protoheme biosynthesis; protoheme from protoporphyrin-IX: step 1/1. Catalyzes the ferrous insertion into protoporphyrin IX. The sequence is that of Ferrochelatase from Rhodobacter capsulatus (Rhodopseudomonas capsulata).